The sequence spans 170 residues: ATP synthase subunit b (170 aa).

A helical transmembrane segment spans residues 11–31; it reads GLNTGDIIFQLIAMLILLALL.

This sequence belongs to the ATPase B chain family. In terms of assembly, F-type ATPases have 2 components, F(1) - the catalytic core - and F(0) - the membrane proton channel. F(1) has five subunits: alpha(3), beta(3), gamma(1), delta(1), epsilon(1). F(0) has three main subunits: a(1), b(2) and c(10-14). The alpha and beta chains form an alternating ring which encloses part of the gamma chain. F(1) is attached to F(0) by a central stalk formed by the gamma and epsilon chains, while a peripheral stalk is formed by the delta and b chains.

The protein resides in the cell membrane. Functionally, f(1)F(0) ATP synthase produces ATP from ADP in the presence of a proton or sodium gradient. F-type ATPases consist of two structural domains, F(1) containing the extramembraneous catalytic core and F(0) containing the membrane proton channel, linked together by a central stalk and a peripheral stalk. During catalysis, ATP synthesis in the catalytic domain of F(1) is coupled via a rotary mechanism of the central stalk subunits to proton translocation. Its function is as follows. Component of the F(0) channel, it forms part of the peripheral stalk, linking F(1) to F(0). In Bacillus pumilus (strain SAFR-032), this protein is ATP synthase subunit b.